Here is a 188-residue protein sequence, read N- to C-terminus: Nicotinamide-nucleotide adenylyltransferase (188 aa).

The protein belongs to the archaeal NMN adenylyltransferase family.

It is found in the cytoplasm. The catalysed reaction is beta-nicotinamide D-ribonucleotide + ATP + H(+) = diphosphate + NAD(+). It functions in the pathway cofactor biosynthesis; NAD(+) biosynthesis; NAD(+) from nicotinamide D-ribonucleotide: step 1/1. This Pyrococcus furiosus (strain ATCC 43587 / DSM 3638 / JCM 8422 / Vc1) protein is Nicotinamide-nucleotide adenylyltransferase.